Consider the following 2873-residue polypeptide: Serine/threonine-protein kinase TEL1 (2873 aa).

Residues 1830–2425 (KFYQLACEVK…LYLLLSLKKH (596 aa)) form the FAT domain. Residues 2530–2839 (DKKISIATSG…AIMTVIEKLN (310 aa)) form the PI3K/PI4K catalytic domain. The interval 2536 to 2542 (ATSGLSL) is G-loop. The tract at residues 2706-2714 (GLGDRHCNN) is catalytic loop. Residues 2726 to 2750 (HIDLGVAFDQGKRLAIPETVPFRLT) are activation loop. The FATC domain maps to 2841–2873 (NGLSTEAAVRELIQEATSTQNLALIYFGWSPFY).

The protein belongs to the PI3/PI4-kinase family. ATM subfamily. Associates with DNA double-strand breaks.

The protein localises to the nucleus. It localises to the chromosome. Its subcellular location is the telomere. It carries out the reaction L-seryl-[protein] + ATP = O-phospho-L-seryl-[protein] + ADP + H(+). It catalyses the reaction L-threonyl-[protein] + ATP = O-phospho-L-threonyl-[protein] + ADP + H(+). Functionally, serine/threonine protein kinase which activates checkpoint signaling upon genotoxic stresses such as ionizing radiation (IR), ultraviolet light (UV), or DNA replication stalling, thereby acting as a DNA damage sensor. Recognizes the substrate consensus sequence [ST]-Q. Phosphorylates histone H2A to form H2AS128ph (gamma-H2A) at sites of DNA damage, involved in the regulation of DNA damage response mechanism. Required for the control of telomere length and genome stability. The polypeptide is Serine/threonine-protein kinase TEL1 (TEL1) (Candida albicans (strain SC5314 / ATCC MYA-2876) (Yeast)).